Here is a 310-residue protein sequence, read N- to C-terminus: Phytoene synthase 2, chloroplastic (310 aa).

A chloroplast-targeting transit peptide spans 1 to 25 (DPDIVLPGNLGLLSEAYDRCGEVCA).

The protein belongs to the phytoene/squalene synthase family. As to quaternary structure, monomer.

Its subcellular location is the plastid. It localises to the chloroplast. The catalysed reaction is 2 (2E,6E,10E)-geranylgeranyl diphosphate = 15-cis-phytoene + 2 diphosphate. It functions in the pathway carotenoid biosynthesis; phytoene biosynthesis; all-trans-phytoene from geranylgeranyl diphosphate: step 1/1. Its function is as follows. Catalyzes the reaction from prephytoene diphosphate to phytoene. In Solanum lycopersicum (Tomato), this protein is Phytoene synthase 2, chloroplastic (PSY2).